The primary structure comprises 249 residues: T-cell immunoreceptor with Ig and ITIM domains (249 aa).

A signal peptide spans 1–28 (MHGWLLLVWVQGLIQAAFLATAIGATAG). The region spanning 29–127 (TIDTKRNISA…GGIYKGRIFL (99 aa)) is the Ig-like V-type domain. Residues 29-148 (TIDTKRNISA…LAQFQTAPLG (120 aa)) are Extracellular-facing. Residues 35–45 (NISAEEGGSVI) form a homodimerization region. Cysteine 48 and cysteine 111 are oxidised to a cystine. An N-linked (GlcNAc...) asparagine glycan is attached at asparagine 104. The helical transmembrane segment at 149-169 (GTMAAVLGLICLMVTGVTVLA) threads the bilayer. The Cytoplasmic segment spans residues 170-249 (RKDKSIRMHS…ESFIAVSKTG (80 aa)). The interval 182-222 (SGLGRTEAEPQEWNLRSLSSPGSPVQTQTAPAGPCGEQAED) is disordered. Over residues 195-211 (NLRSLSSPGSPVQTQTA) the composition is skewed to polar residues. The short motif at 234-239 (LSYRSL) is the ITIM motif element.

Homodimer in cis; binds with high affinity to PVR, forming a heterotetrameric assembly of two TIGIT and two PVR molecules. Binds with lower affinity to NECTIN2 and NECTIN3. Interacts with GRB2. Interacts with NECTIN4.

It is found in the cell membrane. Inhibitory receptor that plays a role in the modulation of immune responses. Suppresses T-cell activation by promoting the generation of mature immunoregulatory dendritic cells. Upon binding to its ligands PVR/CD155 or NECTIN2/CD112, which are expressed on antigen-presenting cells, sends inhibitory signals to the T-cell or NK cell. Mechanistically, interaction with ligand leads to phosphorylation of the cytoplasmic tail by Src family tyrosine kinases such as FYN or LCK, allowing subsequent binding to adapter GRB2 and SHIP1/INPP5D. In turn, inhibits PI3K and MAPK signaling cascades. In addition, associates with beta-arrestin-2/ARRB2 to recruit SHIP1/INPP5D that suppresses autoubiquitination of TRAF6 and subsequently inhibits NF-kappa-B signaling pathway. Also acts as a receptor for NECTIN4 to inhibit NK cell cytotoxicity. This is T-cell immunoreceptor with Ig and ITIM domains from Mus musculus (Mouse).